We begin with the raw amino-acid sequence, 331 residues long: Phosphate acyltransferase (331 aa).

This sequence belongs to the PlsX family. As to quaternary structure, homodimer. Probably interacts with PlsY.

The protein localises to the cytoplasm. It catalyses the reaction a fatty acyl-[ACP] + phosphate = an acyl phosphate + holo-[ACP]. Its pathway is lipid metabolism; phospholipid metabolism. Functionally, catalyzes the reversible formation of acyl-phosphate (acyl-PO(4)) from acyl-[acyl-carrier-protein] (acyl-ACP). This enzyme utilizes acyl-ACP as fatty acyl donor, but not acyl-CoA. In Mesoplasma florum (strain ATCC 33453 / NBRC 100688 / NCTC 11704 / L1) (Acholeplasma florum), this protein is Phosphate acyltransferase.